A 167-amino-acid polypeptide reads, in one-letter code: Transcription factor E (167 aa).

The HTH TFE/IIEalpha-type domain maps to 5 to 87; that stretch reads ENPIHRAYLL…LWKICPESLD (83 aa).

It belongs to the TFE family. In terms of assembly, monomer. Interaction with RNA polymerase subunits RpoF and RpoE is necessary for Tfe stimulatory transcription activity. Able to interact with Tbp and RNA polymerase in the absence of DNA promoter. Interacts both with the preinitiation and elongation complexes.

Transcription factor that plays a role in the activation of archaeal genes transcribed by RNA polymerase. Facilitates transcription initiation by enhancing TATA-box recognition by TATA-box-binding protein (Tbp), and transcription factor B (Tfb) and RNA polymerase recruitment. Not absolutely required for transcription in vitro, but particularly important in cases where Tbp or Tfb function is not optimal. It dynamically alters the nucleic acid-binding properties of RNA polymerases by stabilizing the initiation complex and destabilizing elongation complexes. Seems to translocate with the RNA polymerase following initiation and acts by binding to the non template strand of the transcription bubble in elongation complexes. This is Transcription factor E from Methanothrix thermoacetophila (strain DSM 6194 / JCM 14653 / NBRC 101360 / PT) (Methanosaeta thermophila).